The chain runs to 304 residues: Insulin-like growth factor 1 receptor (304 aa).

2 Fibronectin type-III domains span residues 1–43 (ERTV…TMPA) and 49–142 (IPGP…VQAK). At 1 to 147 (ERTVISNLRP…YVQAKTTYEN (147 aa)) the chain is on the extracellular side. N-linked (GlcNAc...) asparagine glycosylation is found at Asn-115 and Asn-128. Residues 148 to 168 (FIHLIIALPVAVLLIVGGLVI) traverse the membrane as a helical segment. At 169–304 (MLYVFHRKRN…HMNGGRKNER (136 aa)) the chain is on the cytoplasmic side. Ser-225 carries the phosphoserine; by GSK3-beta modification. Ser-229 is subject to Phosphoserine. Residues 231–304 (ENKPPEPEEL…HMNGGRKNER (74 aa)) form a disordered region. A compositionally biased stretch (acidic residues) spans 237 to 246 (PEELDLEPEN). Positions 247–263 (MESVPLDPSASSSSLPL) are enriched in low complexity. Residues 264–273 (PDRHSGHKAE) are compositionally biased toward basic and acidic residues.

Belongs to the protein kinase superfamily. Tyr protein kinase family. Insulin receptor subfamily. Tetramer of 2 alpha and 2 beta chains linked by disulfide bonds. The alpha chains contribute to the formation of the ligand-binding domain, while the beta chain carries the kinase domain. Forms a hybrid receptor with INSR, the hybrid is a tetramer consisting of 1 alpha chain and 1 beta chain of INSR and 1 alpha chain and 1 beta chain of IGF1R. Interacts with ARRB1 and ARRB2. Interacts with GRB10. Interacts with RACK1. Interacts with SOCS1, SOCS2 and SOCS3. Interacts with 14-3-3 proteins. Interacts with NMD2. Interacts with MAP3K5. Interacts with STAT3. Found in a ternary complex with IGF1 and ITGAV:ITGB3 or ITGA6:ITGB4. Interacts (nascent precursor form) with ZFAND2B. In terms of processing, autophosphorylated on tyrosine residues in response to ligand binding. Autophosphorylation occurs in trans, i.e. one subunit of the dimeric receptor phosphorylates tyrosine residues on the other subunit. Autophosphorylation occurs in a sequential manner. While every single phosphorylation increases kinase activity, all three tyrosine residues in the kinase activation loop have to be phosphorylated for optimal activity. Can be autophosphorylated at additional tyrosine residues (in vitro). May also be phosphorylated at tyrosine residues by mTORC2. Autophosphorylated is followed by phosphorylation of juxtamembrane tyrosines and C-terminal serines. Phosphorylation of Ser-225 by GSK-3beta restrains kinase activity and promotes cell surface expression, it requires a priming phosphorylation at Ser-229. Dephosphorylated by PTPN1. Polyubiquitinated in the activation loop through both 'Lys-48' and 'Lys-29' linkages, promoting receptor endocytosis and subsequent degradation by the proteasome. Ubiquitination is facilitated by pre-existing phosphorylation. Post-translationally, sumoylated with SUMO1. In terms of processing, controlled by regulated intramembrane proteolysis (RIP). Undergoes metalloprotease-dependent constitutive ectodomain shedding to produce a membrane-anchored 52 kDa C-Terminal fragment which is further processed by presenilin gamma-secretase to yield an intracellular 50 kDa fragment.

Its subcellular location is the cell membrane. It catalyses the reaction L-tyrosyl-[protein] + ATP = O-phospho-L-tyrosyl-[protein] + ADP + H(+). Activated by autophosphorylation at tyrosines in the kinase activation loop; phosphorylation at all three tyrosine residues is required for optimal kinase activity. Inhibited by MSC1609119A-1, BMS-754807, PQIP, benzimidazole pyridinone, isoquinolinedione, bis-azaindole, 3-cyanoquinoline, 2,4-bis-arylamino-1,3-pyrimidine, pyrrolopyrimidine, pyrrole-5-carboxaldehyde, picropodophyllin (PPP), tyrphostin derivatives. While most inhibitors bind to the ATP binding pocket, MSC1609119A-1 functions as allosteric inhibitor and binds close to the DFG motif and the activation loop. Functionally, receptor tyrosine kinase which mediates actions of insulin-like growth factor 1 (IGF1). Binds IGF1 with high affinity and IGF2 and insulin (INS) with a lower affinity. The activated IGF1R is involved in cell growth and survival control. IGF1R is crucial for tumor transformation and survival of malignant cell. Ligand binding activates the receptor kinase, leading to receptor autophosphorylation, and tyrosines phosphorylation of multiple substrates, that function as signaling adapter proteins including, the insulin-receptor substrates (IRS1/2), Shc and 14-3-3 proteins. Phosphorylation of IRSs proteins lead to the activation of two main signaling pathways: the PI3K-AKT/PKB pathway and the Ras-MAPK pathway. The result of activating the MAPK pathway is increased cellular proliferation, whereas activating the PI3K pathway inhibits apoptosis and stimulates protein synthesis. Phosphorylated IRS1 can activate the 85 kDa regulatory subunit of PI3K (PIK3R1), leading to activation of several downstream substrates, including protein AKT/PKB. AKT phosphorylation, in turn, enhances protein synthesis through mTOR activation and triggers the antiapoptotic effects of IGFIR through phosphorylation and inactivation of BAD. In parallel to PI3K-driven signaling, recruitment of Grb2/SOS by phosphorylated IRS1 or Shc leads to recruitment of Ras and activation of the ras-MAPK pathway. In addition to these two main signaling pathways IGF1R signals also through the Janus kinase/signal transducer and activator of transcription pathway (JAK/STAT). Phosphorylation of JAK proteins can lead to phosphorylation/activation of signal transducers and activators of transcription (STAT) proteins. In particular activation of STAT3, may be essential for the transforming activity of IGF1R. The JAK/STAT pathway activates gene transcription and may be responsible for the transforming activity. JNK kinases can also be activated by the IGF1R. IGF1 exerts inhibiting activities on JNK activation via phosphorylation and inhibition of MAP3K5/ASK1, which is able to directly associate with the IGF1R. When present in a hybrid receptor with INSR, binds IGF1. The protein is Insulin-like growth factor 1 receptor (IGF1R) of Sus scrofa (Pig).